The chain runs to 262 residues: Probable esterase azaC (262 aa).

Residues Ser-119, Asp-188, and His-216 each act as charge relay system in the active site.

The protein belongs to the LovG family.

The protein operates within secondary metabolite biosynthesis. Its function is as follows. Probable esterase; part of the gene cluster that mediates the biosynthesis of azaphilones, a class of fungal metabolites characterized by a highly oxygenated pyrano-quinone bicyclic core and exhibiting a broad range of bioactivities. In the first step, the non-reducing polyketide synthase azaA forms the hexaketide precursor from successive condensations of five malonyl-CoA units, presumably with a simple acetyl-CoA starter unit. The reactive polyketide chain then undergoes a PT-mediated C2-C7 cyclization to afford the aromatic ring and is eventually released as an aldehyde through the R-domain. The putative ketoreductase azaE is proposed to catalyze the reduction of the terminal ketone resulting in the early culture product FK17-P2a. The monooxygenase azaH was demonstrated to be the only enzyme required to convert FK17-P2a to azanigerone E. AzaH first hydroxylates the benzaldehyde intermediate FK17-P2a at C4, which triggers the formation of the pyran-ring to afford azanigerone E. In parallel, the 2,4-dimethylhexanoyl chain is synthesized by the HR-PKS azaB and is proposed to be transferred to the C4-hydroxyl of azanigerone E by the acyltransferase azaD directly from the ACP domain of azaB. Alternatively, the 2,4-dimethyl-hexanoyl chain may be offloaded from the HR-PKS as a carboxylic acid and converted to an acyl-CoA by azaF. The resulting acyl-CoA molecule could then be taken up as a substrate by AzaD to form azanigerone B. To yield the carboxylic acid substituent in azanigerone A, the hydroxypropyl side chain of azanigerone B would need to undergo a C-C oxidative cleavage catalyzed by cytochrome P450 AzaI. AzaI is proposed to act on a vicinal diol that leads to a C-C bond scission either through an alkoxyradical intermediate or a peroxy complex. In the biosynthesis of azanigerone A, azanigerone B first undergoes hydroxylation at C10, possibly catalyzed by one of the two FAD-dependent monooxygenases encoded in the cluster, azaG or azaL, resulting in the vicinal diol azanigerone C. Oxidative cleavage of azanigerone C by azaI would yield the corresponding aldehyde derivative of azanigerone A. Finally, the dehydrogenase azaJ is proposed to convert the aldehyde functional group into the carboxylic acid, completing the conversion from azanigerone B to azanigerone A. Alternatively, the oxidation of aldehyde to carboxylic acid may be catalyzed by the same P450 enzyme azaI via consecutive oxidation or by endogenous alcohol dehydrogenase. The sequence is that of Probable esterase azaC from Aspergillus niger (strain ATCC 1015 / CBS 113.46 / FGSC A1144 / LSHB Ac4 / NCTC 3858a / NRRL 328 / USDA 3528.7).